The chain runs to 144 residues: Large ribosomal subunit protein uL15 (144 aa).

Residues 1 to 52 (MRLNSLSPAEGAKHSAKRLGRGIGSGLGKTGGRGHKGQKSRTGGGVRRGFEG) form a disordered region. Over residues 21–31 (RGIGSGLGKTG) the composition is skewed to gly residues.

This sequence belongs to the universal ribosomal protein uL15 family. In terms of assembly, part of the 50S ribosomal subunit.

Functionally, binds to the 23S rRNA. This chain is Large ribosomal subunit protein uL15, found in Actinobacillus pleuropneumoniae serotype 5b (strain L20).